The sequence spans 1458 residues: Phospholipase B1, membrane-associated (1458 aa).

Positions 1–21 are cleaved as a signal peptide; it reads MGLRPGIFLLELLLLLGQGTP. Topologically, residues 22–1417 are extracellular; the sequence is QIHTSPRKST…QAEEAPEVLY (1396 aa). 3 consecutive repeat copies span residues 39-347, 362-707, and 708-1054. Residues 39 to 1402 form a 4 X 308-326 AA approximate repeats region; sequence ETLKNSPFPC…SPYLYTLRNS (1364 aa). 2 N-linked (GlcNAc...) asparagine glycosylation sites follow: asparagine 173 and asparagine 240. Serine 400 is a catalytic residue. N-linked (GlcNAc...) asparagine glycosylation is present at asparagine 493. Residue aspartate 514 is part of the active site. Residues asparagine 529 and asparagine 590 are each glycosylated (N-linked (GlcNAc...) asparagine). Histidine 655 is a catalytic residue. 8 N-linked (GlcNAc...) asparagine glycosylation sites follow: asparagine 690, asparagine 783, asparagine 797, asparagine 809, asparagine 1055, asparagine 1113, asparagine 1275, and asparagine 1378. Residues 1064 to 1402 form repeat 4; that stretch reads IENWGSDFLC…SPYLYTLRNS (339 aa). The interval 1403–1445 is necessary for membrane localization; sequence RLLPDQAEEAPEVLYWAVPVAAGVGLVVGIIGTVVWRCRRGGR. A helical membrane pass occupies residues 1418–1438; that stretch reads WAVPVAAGVGLVVGIIGTVVW. The Cytoplasmic portion of the chain corresponds to 1439-1458; sequence RCRRGGRREDPPMSLRTVAL.

The protein belongs to the 'GDSL' lipolytic enzyme family. Phospholipase B1 subfamily. Undergoes proteolytic cleavage in the ileum. As to expression, expressed in the epidermis (at protein level).

Its subcellular location is the apical cell membrane. It carries out the reaction a 1,2-diacyl-sn-glycero-3-phosphocholine + H2O = a 1-acyl-sn-glycero-3-phosphocholine + a fatty acid + H(+). The enzyme catalyses a 1-O-alkyl-2-acyl-sn-glycero-3-phosphocholine + H2O = a 1-O-alkyl-sn-glycero-3-phosphocholine + a fatty acid + H(+). The catalysed reaction is a 1-acyl-sn-glycero-3-phosphocholine + H2O = sn-glycerol 3-phosphocholine + a fatty acid + H(+). It catalyses the reaction a triacylglycerol + H2O = a diacylglycerol + a fatty acid + H(+). It carries out the reaction 1,2-dihexadecanoyl-sn-glycero-3-phosphocholine + H2O = 1-hexadecanoyl-sn-glycero-3-phosphocholine + hexadecanoate + H(+). The enzyme catalyses 1-hexadecanoyl-2-(9Z-octadecenoyl)-sn-glycero-3-phosphocholine + H2O = 1-hexadecanoyl-sn-glycero-3-phosphocholine + (9Z)-octadecenoate + H(+). The catalysed reaction is 1,2-di-(9Z-octadecenoyl)-sn-glycero-3-phosphocholine + H2O = 1-(9Z-octadecenoyl)-sn-glycero-3-phosphocholine + (9Z)-octadecenoate + H(+). It catalyses the reaction 1-hexadecanoyl-2-(9Z,12Z-octadecadienoyl)-sn-glycero-3-phosphocholine + H2O = (9Z,12Z)-octadecadienoate + 1-hexadecanoyl-sn-glycero-3-phosphocholine + H(+). It carries out the reaction 1-hexadecanoyl-2-(9Z,12Z-octadecadienoyl)-sn-glycero-3-phosphocholine + H2O = 2-(9Z,12Z-octadecadienoyl)-sn-glycero-3-phosphocholine + hexadecanoate + H(+). The enzyme catalyses 1-hexadecanoyl-2-(9Z-octadecenoyl)-sn-glycero-3-phosphoethanolamine + H2O = 1-hexadecanoyl-sn-glycero-3-phosphoethanolamine + (9Z)-octadecenoate + H(+). The catalysed reaction is 1-hexadecanoyl-2-(9Z-octadecenoyl)-sn-glycero-3-phospho-(1'-sn-glycerol) + H2O = 1-hexadecanoyl-sn-glycero-3-phospho-(1'-sn-glycerol) + (9Z)-octadecenoate + H(+). It catalyses the reaction 1,2-dihexadecanoyl-sn-glycero-3-phosphocholine + 2 H2O = sn-glycerol 3-phosphocholine + 2 hexadecanoate + 2 H(+). It carries out the reaction 1-O-hexadecyl-2-(9Z)-octadecenoyl-sn-glycero-3-phosphocholine + H2O = 1-O-hexadecyl-sn-glycero-3-phosphocholine + (9Z)-octadecenoate + H(+). The enzyme catalyses 1-hexadecanoyl-sn-glycero-3-phosphocholine + H2O = sn-glycerol 3-phosphocholine + hexadecanoate + H(+). The catalysed reaction is 1,2,3-tri-(9Z-octadecenoyl)-glycerol + H2O = di-(9Z)-octadecenoylglycerol + (9Z)-octadecenoate + H(+). It catalyses the reaction 1-hexadecanoyl-2-(9Z)-octadecenoyl-3-octadecanoyl-sn-glycerol + H2O = 1-hexadecanoyl-2-(9Z-octadecenoyl)-sn-glycerol + octadecanoate + H(+). It carries out the reaction 1,3-dihexadecanoyl-2-(9Z-octadecenoyl)glycerol + H2O = 1,3-dihexadecanoylglycerol + (9Z)-octadecenoate + H(+). The enzyme catalyses 1,3-dihexadecanoyl-2-(9Z-octadecenoyl)glycerol + H2O = 1-hexadecanoyl-2-(9Z-octadecenoyl)-glycerol + hexadecanoate + H(+). The catalysed reaction is 1-hexadecanoyl-2-(9Z)-octadecenoyl-3-octadecanoyl-sn-glycerol + H2O = 1-hexadecanoyl-3-octadecanoyl-sn-glycerol + (9Z)-octadecenoate + H(+). It catalyses the reaction 1-hexadecanoyl-2-(9Z)-octadecenoyl-3-octadecanoyl-sn-glycerol + H2O = 2-(9Z-octadecenoyl)-3-octadecanoyl-sn-glycerol + hexadecanoate + H(+). It carries out the reaction 1-octadecanoyl-2-(9Z,12Z)-octadecadienoyl-sn-glycerol + H2O = 1-octadecanoyl-sn-glycerol + (9Z,12Z)-octadecadienoate + H(+). The enzyme catalyses 1,2-di-(9Z-octadecenoyl)-sn-glycerol + H2O = 1-(9Z-octadecenoyl)-sn-glycerol + (9Z)-octadecenoate + H(+). The catalysed reaction is 2,3-di-(9Z)-octadecenoyl-sn-glycerol + H2O = 3-(9Z-octadecenoyl)-sn-glycerol + (9Z)-octadecenoate + H(+). It catalyses the reaction 1,3-di-(9Z-octadecenoyl)-glycerol + H2O = 1-(9Z-octadecenoyl)-glycerol + (9Z)-octadecenoate + H(+). It carries out the reaction 1-(9Z-octadecenoyl)-glycerol + H2O = glycerol + (9Z)-octadecenoate + H(+). The enzyme catalyses 2-(9Z-octadecenoyl)-glycerol + H2O = glycerol + (9Z)-octadecenoate + H(+). Calcium-independent membrane-associated phospholipase that catalyzes complete diacylation of phospholipids by hydrolyzing both sn-1 and sn-2 fatty acyl chains attached to the glycerol backbone (phospholipase B activity). Has dual phospholipase and lysophospholipase activities toward diacylphospholipids. Preferentially cleaves sn-2 ester bonds over sn-1 bonds. Acts as a lipase toward glycerolipid substrates. Hydrolyzes fatty acyl chains of diacylglycerols with preference for the sn-2 position and of triacylglycerols with not positional selectivity. May also hydrolyze long chain retinyl esters such as retinyl palmitate. May contribute to digestion of dietary phospholipids, glycerolipids and retinoids, facilitating lipid absorption at the brush border. This chain is Phospholipase B1, membrane-associated (PLB1), found in Homo sapiens (Human).